The primary structure comprises 447 residues: Glucose-6-phosphate isomerase (447 aa).

E288 functions as the Proton donor in the catalytic mechanism. Catalysis depends on residues H309 and K423.

Belongs to the GPI family.

Its subcellular location is the cytoplasm. It carries out the reaction alpha-D-glucose 6-phosphate = beta-D-fructose 6-phosphate. The protein operates within carbohydrate biosynthesis; gluconeogenesis. Its pathway is carbohydrate degradation; glycolysis; D-glyceraldehyde 3-phosphate and glycerone phosphate from D-glucose: step 2/4. In terms of biological role, catalyzes the reversible isomerization of glucose-6-phosphate to fructose-6-phosphate. This Lactobacillus gasseri (strain ATCC 33323 / DSM 20243 / BCRC 14619 / CIP 102991 / JCM 1131 / KCTC 3163 / NCIMB 11718 / NCTC 13722 / AM63) protein is Glucose-6-phosphate isomerase.